The primary structure comprises 113 residues: U11-theraphotoxin-Hhn1a (113 aa).

Positions 1 to 21 are cleaved as a signal peptide; that stretch reads MNTVRVTFLLVFVLAVSLGQA. A propeptide spanning residues 22 to 74 is cleaved from the precursor; the sequence is DKDENRMEVQEKTEQGKSYLDFAENLLLQKLEELEAKLLEEDSEESRNSRQKR. The tract at residues 61 to 83 is disordered; sequence EEDSEESRNSRQKRCIGEGVPCD. Cystine bridges form between C75–C90, C82–C95, and C89–C110.

This sequence belongs to the neurotoxin 14 (magi-1) family. 01 (HNTX-16) subfamily. Expressed by the venom gland.

The protein localises to the secreted. Its function is as follows. Probable ion channel inhibitor. This is U11-theraphotoxin-Hhn1a from Cyriopagopus hainanus (Chinese bird spider).